Consider the following 297-residue polypeptide: HTH-type transcriptional regulator ArgP (297 aa).

One can recognise an HTH lysR-type domain in the interval Pro-4–Thr-60. The H-T-H motif DNA-binding region spans Phe-21–Lys-40.

It belongs to the LysR transcriptional regulatory family. Homodimer.

In terms of biological role, controls the transcription of genes involved in arginine and lysine metabolism. This is HTH-type transcriptional regulator ArgP from Yersinia enterocolitica serotype O:8 / biotype 1B (strain NCTC 13174 / 8081).